Reading from the N-terminus, the 340-residue chain is Probable peroxidase 61 (340 aa).

The first 25 residues, 1–25, serve as a signal peptide directing secretion; the sequence is MQFVNFFPLLALVVISLAGKATVEA. 4 cysteine pairs are disulfide-bonded: Cys46-Cys122, Cys79-Cys84, Cys128-Cys331, and Cys205-Cys237. Asn63 is a glycosylation site (N-linked (GlcNAc...) asparagine). Arg73 is an active-site residue. Ca(2+) is bound by residues Asp78, Val81, Gly83, Asp85, and Ser87. Pro168 serves as a coordination point for substrate. Heme b is bound at residue His198. A Ca(2+)-binding site is contributed by Ser199. Asn226 carries an N-linked (GlcNAc...) asparagine glycan. Asp255 and Ser258 together coordinate Ca(2+).

The protein belongs to the peroxidase family. Classical plant (class III) peroxidase subfamily. The cofactor is heme b. Ca(2+) is required as a cofactor.

The protein localises to the secreted. The enzyme catalyses 2 a phenolic donor + H2O2 = 2 a phenolic radical donor + 2 H2O. In terms of biological role, removal of H(2)O(2), oxidation of toxic reductants, biosynthesis and degradation of lignin, suberization, auxin catabolism, response to environmental stresses such as wounding, pathogen attack and oxidative stress. The enzyme activity has to be proved. The chain is Probable peroxidase 61 (PER61) from Arabidopsis thaliana (Mouse-ear cress).